Reading from the N-terminus, the 545-residue chain is Probable quinate permease (545 aa).

Topologically, residues 1 to 22 are cytoplasmic; it reads MSILSLVEDRPTPKEVYNWRIY. The helical transmembrane segment at 23–43 threads the bilayer; the sequence is LLAAVASFTSCMIGYDSAFIG. Residues 44-66 lie on the Extracellular side of the membrane; sequence TTISLQSFKDEFNWDAMSTDKQN. The chain crosses the membrane as a helical span at residues 67–87; that stretch reads LISANIVSLYQAGAFFGAFFA. Residues 88 to 97 lie on the Cytoplasmic side of the membrane; the sequence is YPMGHFWGRR. The chain crosses the membrane as a helical span at residues 98-118; sequence WGLFVAALVFTLGAGLMLGAN. The Extracellular portion of the chain corresponds to 119–130; the sequence is GDRGLGLIYGGR. A helical transmembrane segment spans residues 131–151; the sequence is VLAGLGVGAGSNITPIYISEL. Over 152–159 the chain is Cytoplasmic; that stretch reads APPAIRGR. The chain crosses the membrane as a helical span at residues 160–180; it reads LVGVYELGWQIGGLVGFWICF. Topologically, residues 181 to 193 are extracellular; sequence GVDDTLAPSHKQW. A helical transmembrane segment spans residues 194–214; sequence IIPFAVQLIPSGLLLLGILFV. Residues 215–285 are Cytoplasmic-facing; sequence RESPRWLFLR…VWSNKRIMYR (71 aa). A helical transmembrane segment spans residues 286 to 306; it reads LFLGSMLFLWQNGSGINAINY. Residues 307-325 are Extracellular-facing; that stretch reads YSPTVFKSIGLRGANTSLL. Residues 326 to 346 form a helical membrane-spanning segment; it reads TTGIFGVVKTVVTFVWLLWLI. Residues 347-352 lie on the Cytoplasmic side of the membrane; sequence DRLGRR. A helical transmembrane segment spans residues 353–373; the sequence is LLLMIGAAGGSVCLWIVGAYI. Over 374–384 the chain is Extracellular; that stretch reads KVAKPTERDPD. A helical transmembrane segment spans residues 385-405; it reads APLDGGGIAAMFFFYLWTVFY. Topologically, residues 406–457 are cytoplasmic; that stretch reads TPSWNGTPWVMNSEMFDPNVRSLAQACAAGSNWLWNFLISRFTPQMFAKMEY. A helical membrane pass occupies residues 458–478; sequence GVYFFFASLMILSIVFVFFLI. Over 479 to 545 the chain is Extracellular; the sequence is PETKGIPLES…VEQAESVPKA (67 aa). A disordered region spans residues 520–545; sequence IEESGYTKSDAQQVERVEQAESVPKA.

Belongs to the major facilitator superfamily. Sugar transporter (TC 2.A.1.1) family. Interacts with creB. Post-translationally, ubiquitinated. Deubiquitinated by creB, probably to control its activity or amount.

The protein resides in the cell membrane. Its function is as follows. Integral membrane transporter that imports quinic acid to be catabolized as a carbon source. The chain is Probable quinate permease (qutD) from Aspergillus terreus (strain NIH 2624 / FGSC A1156).